A 461-amino-acid polypeptide reads, in one-letter code: Cysteine--tRNA ligase (461 aa).

Position 28 (Cys-28) interacts with Zn(2+). The 'HIGH' region signature appears at 30 to 40 (ITIYDLCHIGH). Zn(2+)-binding residues include Cys-209, His-234, and Glu-238. A 'KMSKS' region motif is present at residues 266–270 (KMSKS). Residue Lys-269 participates in ATP binding.

It belongs to the class-I aminoacyl-tRNA synthetase family. Monomer. Zn(2+) serves as cofactor.

The protein localises to the cytoplasm. It carries out the reaction tRNA(Cys) + L-cysteine + ATP = L-cysteinyl-tRNA(Cys) + AMP + diphosphate. This Yersinia enterocolitica serotype O:8 / biotype 1B (strain NCTC 13174 / 8081) protein is Cysteine--tRNA ligase.